The sequence spans 406 residues: MRALIDMYQRIGLVPLIIVGLVLGILIGWLMPSVGVALGLLGSLFVGALKAVAPILVFILVMAAISQHQGESQVHVRPVLIMYIFGTFLAALTAVVASFAFPTELLGLNTIEAVADQAPPSGLKEVLTTLLMNLVDNPVNAIANANYMGILAWALIIGLALRKASATTRTMVSDLSEAISNVVRFVIAFAPIGILGLVANTIAETGFSALMSYGRLLTILVGCMLFIALVVNPIIVAFNIRRNPYPLVFTCLRESGITAFFTRSSAANIPVNMNLAKKLGLHEDTYSVTLPLGATINMAGAAITINVLTLAAAHTLGVPVDFGSALLLSVVATVAACGASGVAGGSLLLIPLACSLFNIPNDIAMQVVAIGFIIGVVQDSAETALNSSTDVLFTAAADPIMKNKTA.

A run of 9 helical transmembrane segments spans residues 11–31, 45–65, 79–99, 141–161, 185–205, 216–236, 298–318, 330–350, and 357–377; these read IGLVPLIIVGLVLGILIGWLM, FVGALKAVAPILVFILVMAAI, VLIMYIFGTFLAALTAVVASF, AIANANYMGILAWALIIGLAL, FVIAFAPIGILGLVANTIAET, LLTILVGCMLFIALVVNPIIV, MAGAAITINVLTLAAAHTLGV, VVATVAACGASGVAGGSLLLI, and FNIPNDIAMQVVAIGFIIGVV.

The protein belongs to the dicarboxylate/amino acid:cation symporter (DAACS) (TC 2.A.23) family.

Its subcellular location is the cell inner membrane. The enzyme catalyses L-serine(in) + Na(+)(in) = L-serine(out) + Na(+)(out). It carries out the reaction L-threonine(in) + Na(+)(in) = L-threonine(out) + Na(+)(out). Involved in the import of serine and threonine into the cell, with the concomitant import of sodium (symport system). This is Serine/threonine transporter SstT from Psychrobacter sp. (strain PRwf-1).